The sequence spans 204 residues: Ribonuclease HII (204 aa).

The 191-residue stretch at 14 to 204 (QYICGVDEVG…SFKLSCLGEK (191 aa)) folds into the RNase H type-2 domain. Positions 20, 21, and 116 each coordinate a divalent metal cation.

Belongs to the RNase HII family. Mn(2+) serves as cofactor. It depends on Mg(2+) as a cofactor.

It is found in the cytoplasm. It carries out the reaction Endonucleolytic cleavage to 5'-phosphomonoester.. Its function is as follows. Endonuclease that specifically degrades the RNA of RNA-DNA hybrids. In Chloroherpeton thalassium (strain ATCC 35110 / GB-78), this protein is Ribonuclease HII.